Consider the following 775-residue polypeptide: 1,4-alpha-glucan branching enzyme GlgB (775 aa).

D431 serves as the catalytic Nucleophile. E484 (proton donor) is an active-site residue.

The protein belongs to the glycosyl hydrolase 13 family. GlgB subfamily. In terms of assembly, monomer.

The catalysed reaction is Transfers a segment of a (1-&gt;4)-alpha-D-glucan chain to a primary hydroxy group in a similar glucan chain.. It participates in glycan biosynthesis; glycogen biosynthesis. Its function is as follows. Catalyzes the formation of the alpha-1,6-glucosidic linkages in glycogen by scission of a 1,4-alpha-linked oligosaccharide from growing alpha-1,4-glucan chains and the subsequent attachment of the oligosaccharide to the alpha-1,6 position. This chain is 1,4-alpha-glucan branching enzyme GlgB, found in Parasynechococcus marenigrum (strain WH8102).